The sequence spans 315 residues: Ribosomal large subunit pseudouridine synthase D (315 aa).

Residues 18–87 form the S4 RNA-binding domain; it reads KRLDQILSKL…LPQNIALNTI (70 aa). Residue Asp139 is part of the active site.

This sequence belongs to the pseudouridine synthase RluA family.

The protein resides in the cytoplasm. It catalyses the reaction uridine(1911/1915/1917) in 23S rRNA = pseudouridine(1911/1915/1917) in 23S rRNA. In terms of biological role, responsible for synthesis of pseudouridine from uracil at positions 1911, 1915 and 1917 in 23S ribosomal RNA. This chain is Ribosomal large subunit pseudouridine synthase D (rluD), found in Buchnera aphidicola subsp. Schizaphis graminum (strain Sg).